A 511-amino-acid chain; its full sequence is ATP synthase subunit alpha (511 aa).

Residue 169–176 (GDRKTGKT) coordinates ATP.

The protein belongs to the ATPase alpha/beta chains family. As to quaternary structure, F-type ATPases have 2 components, CF(1) - the catalytic core - and CF(0) - the membrane proton channel. CF(1) has five subunits: alpha(3), beta(3), gamma(1), delta(1), epsilon(1). CF(0) has three main subunits: a(1), b(2) and c(9-12). The alpha and beta chains form an alternating ring which encloses part of the gamma chain. CF(1) is attached to CF(0) by a central stalk formed by the gamma and epsilon chains, while a peripheral stalk is formed by the delta and b chains.

The protein localises to the cell membrane. The catalysed reaction is ATP + H2O + 4 H(+)(in) = ADP + phosphate + 5 H(+)(out). Produces ATP from ADP in the presence of a proton gradient across the membrane. The alpha chain is a regulatory subunit. This is ATP synthase subunit alpha from Latilactobacillus sakei subsp. sakei (strain 23K) (Lactobacillus sakei subsp. sakei).